The primary structure comprises 501 residues: ATP synthase subunit alpha, chloroplastic (501 aa).

170-177 (GDRQTGKT) provides a ligand contact to ATP.

It belongs to the ATPase alpha/beta chains family. F-type ATPases have 2 components, CF(1) - the catalytic core - and CF(0) - the membrane proton channel. CF(1) has five subunits: alpha(3), beta(3), gamma(1), delta(1), epsilon(1). CF(0) has four main subunits: a, b, b' and c.

Its subcellular location is the plastid. It localises to the chloroplast thylakoid membrane. The catalysed reaction is ATP + H2O + 4 H(+)(in) = ADP + phosphate + 5 H(+)(out). Its function is as follows. Produces ATP from ADP in the presence of a proton gradient across the membrane. The alpha chain is a regulatory subunit. The chain is ATP synthase subunit alpha, chloroplastic from Nephroselmis olivacea (Green alga).